The following is a 495-amino-acid chain: Angiopoietin-2 (495 aa).

The N-terminal stretch at 1–18 (MWQIVFFTLSCDLVRAAA) is a signal peptide. N-linked (GlcNAc...) asparagine glycosylation is found at Asn88, Asn118, Asn132, Asn150, Asn239, and Asn303. Residues 165 to 247 (STNKLEKQIL…VNNSVLQKQQ (83 aa)) are a coiled coil. The 221-residue stretch at 274 to 494 (KEEQIIYRDC…GTTMMIRPAD (221 aa)) folds into the Fibrinogen C-terminal domain. Cys283 and Cys312 are oxidised to a cystine. Asp428, Asp430, Cys432, and Cys434 together coordinate Ca(2+). 2 disulfide bridges follow: Cys432–Cys434 and Cys436–Cys449.

As to quaternary structure, interacts with TEK/TIE2, competing for the same binding site as ANGPT1. Interacts with ITGA5. Interacts with SVEP1/polydom. Interacts with THBD; this interaction significantly inhibits the generation of activated PC and TAFIa/CPB2 by the thrombin/thrombomodulin complex.

Its subcellular location is the secreted. Functionally, binds to TEK/TIE2, competing for the ANGPT1 binding site, and modulating ANGPT1 signaling. Can induce tyrosine phosphorylation of TEK/TIE2 in the absence of ANGPT1. In the absence of angiogenic inducers, such as VEGF, ANGPT2-mediated loosening of cell-matrix contacts may induce endothelial cell apoptosis with consequent vascular regression. In concert with VEGF, it may facilitate endothelial cell migration and proliferation, thus serving as a permissive angiogenic signal. Involved in the regulation of lymphangiogenesis. The sequence is that of Angiopoietin-2 (ANGPT2) from Canis lupus familiaris (Dog).